The sequence spans 374 residues: Flavonoid O-methyltransferase-like protein Os11g0303600 (374 aa).

Residues Asp242, Asp262, Met263, and Lys276 each coordinate S-adenosyl-L-homocysteine. His280 (proton acceptor) is an active-site residue.

This sequence belongs to the class I-like SAM-binding methyltransferase superfamily. Cation-independent O-methyltransferase family. COMT subfamily.

The chain is Flavonoid O-methyltransferase-like protein Os11g0303600 from Oryza sativa subsp. japonica (Rice).